The primary structure comprises 21 residues: Outer membrane protein A (21 aa).

A beta stranded transmembrane segment spans residues 6–16 (TWYTGAKLGWS).

Belongs to the outer membrane OOP (TC 1.B.6) superfamily. OmpA family. In terms of assembly, monomer and homodimer.

The protein resides in the cell outer membrane. With TolR probably plays a role in maintaining the position of the peptidoglycan cell wall in the periplasm. Acts as a porin with low permeability that allows slow penetration of small solutes; an internal gate slows down solute passage. This chain is Outer membrane protein A, found in Actinobacillus lignieresii.